Here is a 625-residue protein sequence, read N- to C-terminus: tRNA uridine 5-carboxymethylaminomethyl modification enzyme MnmG (625 aa).

Residues 11–16 (GAGHAG), valine 123, and serine 178 each bind FAD. 271-285 (GPRYCPSIETKIVTF) lines the NAD(+) pocket. Residue glutamine 368 participates in FAD binding.

Belongs to the MnmG family. In terms of assembly, homodimer. Heterotetramer of two MnmE and two MnmG subunits. FAD serves as cofactor.

It is found in the cytoplasm. Functionally, NAD-binding protein involved in the addition of a carboxymethylaminomethyl (cmnm) group at the wobble position (U34) of certain tRNAs, forming tRNA-cmnm(5)s(2)U34. The polypeptide is tRNA uridine 5-carboxymethylaminomethyl modification enzyme MnmG (Bacteroides fragilis (strain YCH46)).